Here is a 215-residue protein sequence, read N- to C-terminus: FGFR1 oncogene partner 2 homolog (215 aa).

Coiled coils occupy residues 5-104 and 161-185; these read IEKA…MSKY and KEQERIFQLEQENKGLREILQITRE. Residues 194–215 are disordered; that stretch reads DASESTSLSALVTNSDLSLRKN. Residues 197–215 show a composition bias toward polar residues; sequence ESTSLSALVTNSDLSLRKN.

The protein belongs to the SIKE family.

Its subcellular location is the cytoplasm. Its function is as follows. May be involved in wound healing pathway. This chain is FGFR1 oncogene partner 2 homolog (FGFR1OP2), found in Pongo abelii (Sumatran orangutan).